Here is a 205-residue protein sequence, read N- to C-terminus: Small ribosomal subunit protein uS4 (205 aa).

The disordered stretch occupies residues 19–45 (IWGRPKSPVNRREYGPGQHGQRRKGKL). Residues 94–157 (SRLDAVVYRA…KQLAIVLEAV (64 aa)) enclose the S4 RNA-binding domain.

It belongs to the universal ribosomal protein uS4 family. As to quaternary structure, part of the 30S ribosomal subunit. Contacts protein S5. The interaction surface between S4 and S5 is involved in control of translational fidelity.

One of the primary rRNA binding proteins, it binds directly to 16S rRNA where it nucleates assembly of the body of the 30S subunit. Functionally, with S5 and S12 plays an important role in translational accuracy. This chain is Small ribosomal subunit protein uS4, found in Brucella suis biovar 1 (strain 1330).